A 221-amino-acid polypeptide reads, in one-letter code: Tetraspanin-2 (221 aa).

The Cytoplasmic portion of the chain corresponds to 1-13 (MGRFRGGLRCIKY). The helical transmembrane segment at 14 to 34 (LLLGFNLLFWLAGSAVIAFGL) threads the bilayer. The Extracellular segment spans residues 35–54 (WFRFGGTIKDLSSEEKSPEY). A helical transmembrane segment spans residues 55 to 75 (FYVGLYVLVGAGALMMAVGFF). Over 76 to 90 (GCCGAMRESQCVLGS) the chain is Cytoplasmic. A helical transmembrane segment spans residues 91–111 (FFTCLLVIFAAEVTTGVFAFI). The Extracellular portion of the chain corresponds to 112-188 (GKDVAIRHVQ…ETIISVKLQL (77 aa)). The N-linked (GlcNAc...) asparagine glycan is linked to Asn139. Residues 189–209 (IGIVGIGIAGLTIFGMIFSMV) form a helical membrane-spanning segment. Residues 210–221 (LCCAIRNSRDVI) are Cytoplasmic-facing.

It belongs to the tetraspanin (TM4SF) family. In terms of tissue distribution, expression is restricted to the nervous system.

The protein localises to the membrane. Functionally, may play a role in signalling in oligodendrocytes in the early stages of their terminal differentiation into myelin-forming glia and may also function in stabilizing the mature sheath. This Rattus norvegicus (Rat) protein is Tetraspanin-2 (Tspan2).